A 104-amino-acid chain; its full sequence is Large ribosomal subunit protein uL24 (104 aa).

It belongs to the universal ribosomal protein uL24 family. As to quaternary structure, part of the 50S ribosomal subunit.

One of two assembly initiator proteins, it binds directly to the 5'-end of the 23S rRNA, where it nucleates assembly of the 50S subunit. Functionally, one of the proteins that surrounds the polypeptide exit tunnel on the outside of the subunit. The protein is Large ribosomal subunit protein uL24 of Maricaulis maris (strain MCS10) (Caulobacter maris).